We begin with the raw amino-acid sequence, 1072 residues long: Translation initiation factor IF-2 (1072 aa).

2 disordered regions span residues 55–369 and 426–452; these read ILDK…TGTA and ELVDVSKNKERGQRKRTSGDTQSVSKQ. Composition is skewed to low complexity over residues 91 to 100, 108 to 118, 126 to 179, and 186 to 212; these read AEASQAAEPA, EPATFAAEEPV, APRA…AEVA, and EAPQAPVEAPRAAVPAPAAAQPRPSVQ. A compositionally biased stretch (pro residues) spans 218-230; the sequence is PQPPPRSPVPPAV. Residues 231–245 show a composition bias toward low complexity; that stretch reads RTPSSTSSSATVVSR. Gly residues predominate over residues 253 to 307; the sequence is QRGGPGGGRPGGPGGPGGRPGGPGGPGGRPGGPGGPGGRPGGPGGPGGRPGGPGG. Basic and acidic residues predominate over residues 426–436; it reads ELVDVSKNKER. Residues 570–737 form the tr-type G domain; the sequence is PRPPVVAIMG…NLALQAEVLE (168 aa). The interval 579–586 is G1; it reads GHVDHGKT. A GTP-binding site is contributed by 579–586; sequence GHVDHGKT. The tract at residues 604–608 is G2; that stretch reads GITQH. A G3 region spans residues 625–628; that stretch reads DTPG. GTP is bound by residues 625 to 629 and 679 to 682; these read DTPGH and NKMD. The segment at 679–682 is G4; sequence NKMD. Residues 715-717 are G5; that stretch reads SAK.

It belongs to the TRAFAC class translation factor GTPase superfamily. Classic translation factor GTPase family. IF-2 subfamily.

It localises to the cytoplasm. One of the essential components for the initiation of protein synthesis. Protects formylmethionyl-tRNA from spontaneous hydrolysis and promotes its binding to the 30S ribosomal subunits. Also involved in the hydrolysis of GTP during the formation of the 70S ribosomal complex. The chain is Translation initiation factor IF-2 from Myxococcus xanthus (strain DK1622).